A 116-amino-acid chain; its full sequence is Ribonuclease P protein component (116 aa).

It belongs to the RnpA family. In terms of assembly, consists of a catalytic RNA component (M1 or rnpB) and a protein subunit.

The enzyme catalyses Endonucleolytic cleavage of RNA, removing 5'-extranucleotides from tRNA precursor.. RNaseP catalyzes the removal of the 5'-leader sequence from pre-tRNA to produce the mature 5'-terminus. It can also cleave other RNA substrates such as 4.5S RNA. The protein component plays an auxiliary but essential role in vivo by binding to the 5'-leader sequence and broadening the substrate specificity of the ribozyme. The polypeptide is Ribonuclease P protein component (Lachnoclostridium phytofermentans (strain ATCC 700394 / DSM 18823 / ISDg) (Clostridium phytofermentans)).